The following is a 459-amino-acid chain: N-chimaerin (459 aa).

A2 is subject to N-acetylalanine. Positions 49 to 135 (EFHGMISREA…IETKAAEYIA (87 aa)) constitute an SH2 domain. Residue T192 is modified to Phosphothreonine. The Phorbol-ester/DAG-type zinc finger occupies 205–255 (IHNFKVHTFRGPHWCEYCANFMWGLIAQGVKCADCGLNVHKQCSKMVPNDC). Residues 268 to 459 (CDLTTLVKAH…LLIKNEDILF (192 aa)) enclose the Rho-GAP domain. Phosphothreonine is present on T340.

In terms of assembly, interacts with EPHA4; effector of EPHA4 in axon guidance linking EPHA4 activation to RAC1 regulation. Phosphorylated. Phosphorylation is EPHA4 kinase activity-dependent. In neurons in brain regions that are involved in learning and memory processes.

Its function is as follows. GTPase-activating protein for p21-rac and a phorbol ester receptor. Involved in the assembly of neuronal locomotor circuits as a direct effector of EPHA4 in axon guidance. This Homo sapiens (Human) protein is N-chimaerin (CHN1).